A 113-amino-acid chain; its full sequence is U11-theraphotoxin-Hhn1a (113 aa).

The N-terminal stretch at 1-21 (MNTVRVTFLLVFVLAVSLGRA) is a signal peptide. Residues 22 to 74 (DKDENRMEMQEKTEQGKSYLDFAENLLLQKLEELEAKLLEEDSEESRNSRQKR) constitute a propeptide that is removed on maturation. 3 disulfide bridges follow: Cys75–Cys90, Cys82–Cys95, and Cys89–Cys110.

The protein belongs to the neurotoxin 14 (magi-1) family. 01 (HNTX-16) subfamily. Expressed by the venom gland.

Its subcellular location is the secreted. Its function is as follows. Probable ion channel inhibitor. This Cyriopagopus hainanus (Chinese bird spider) protein is U11-theraphotoxin-Hhn1a.